The sequence spans 172 residues: Peptide deformylase (172 aa).

Cysteine 91 and histidine 133 together coordinate Fe cation. The active site involves glutamate 134. Residue histidine 137 coordinates Fe cation.

This sequence belongs to the polypeptide deformylase family. Fe(2+) serves as cofactor.

The enzyme catalyses N-terminal N-formyl-L-methionyl-[peptide] + H2O = N-terminal L-methionyl-[peptide] + formate. Removes the formyl group from the N-terminal Met of newly synthesized proteins. Requires at least a dipeptide for an efficient rate of reaction. N-terminal L-methionine is a prerequisite for activity but the enzyme has broad specificity at other positions. The sequence is that of Peptide deformylase from Vibrio campbellii (strain ATCC BAA-1116).